Consider the following 347-residue polypeptide: MDLAANEISIYDKLSETVDLVRQTGHQCGMSEKAIEKFIRQLLEKNEPQRPPPQYPLLIVVYKVLATLGLILLTAYFVIQPFSPLAPEPVLSGAHTWRSLIHHIRLMSLPIAKKYMSENKGVPLHGGDEDRPFPDFDPWWTNDCEQNESEPIPANCTGCAQKHLKVMLLEDAPRKFERLHPLVIKTGKPLLEEEIQHFLCQYPEATEGFSEGFFAKWWRCFPERWFPFPYPWRRPLNRSQMLRELFPVFTHLPFPKDASLNKCSFLHPEPVVGSKMHKMPDLFIIGSGEAMLQLIPPFQCRRHCQSVAMPIEPGDIGYVDTTHWKVYVIARGVQPLVICDGTAFSEL.

The Cytoplasmic segment spans residues 1 to 58 (MDLAANEISIYDKLSETVDLVRQTGHQCGMSEKAIEKFIRQLLEKNEPQRPPPQYPLL). A helical transmembrane segment spans residues 59 to 79 (IVVYKVLATLGLILLTAYFVI). The Extracellular portion of the chain corresponds to 80-347 (QPFSPLAPEP…ICDGTAFSEL (268 aa)).

As to quaternary structure, homodimer. Interacts with BRS3. Interacts (via N-terminus) with SIN3B. In terms of processing, glycosylated.

The protein localises to the golgi apparatus membrane. The protein resides in the midbody. It is found in the cytoplasm. It localises to the nucleus. Its subcellular location is the nucleolus. Exhibits histone deacetylase (HDAC) enhancer properties. May play a role in cell cycle progression and wound repair of bronchial epithelial cells. This chain is Bombesin receptor-activated protein C6orf89 (C6orf89), found in Homo sapiens (Human).